Here is a 144-residue protein sequence, read N- to C-terminus: Large ribosomal subunit protein uL15 (144 aa).

The interval 1–54 (MRLNTLSPAPGRVSAKKRVGRGIGSGLGKTAGRGHKGLKSRSGGSVKPGFEGGQ) is disordered. Gly residues predominate over residues 21 to 31 (RGIGSGLGKTA).

The protein belongs to the universal ribosomal protein uL15 family. As to quaternary structure, part of the 50S ribosomal subunit.

Binds to the 23S rRNA. The chain is Large ribosomal subunit protein uL15 from Saccharophagus degradans (strain 2-40 / ATCC 43961 / DSM 17024).